A 171-amino-acid chain; its full sequence is Transcription factor E (171 aa).

The HTH TFE/IIEalpha-type domain occupies 5–88 (YEDPFIRIAV…RWRSRREEVE (84 aa)).

It belongs to the TFE family. In terms of assembly, monomer. Interaction with RNA polymerase subunits RpoF and RpoE is necessary for Tfe stimulatory transcription activity. Able to interact with Tbp and RNA polymerase in the absence of DNA promoter. Interacts both with the preinitiation and elongation complexes.

Transcription factor that plays a role in the activation of archaeal genes transcribed by RNA polymerase. Facilitates transcription initiation by enhancing TATA-box recognition by TATA-box-binding protein (Tbp), and transcription factor B (Tfb) and RNA polymerase recruitment. Not absolutely required for transcription in vitro, but particularly important in cases where Tbp or Tfb function is not optimal. It dynamically alters the nucleic acid-binding properties of RNA polymerases by stabilizing the initiation complex and destabilizing elongation complexes. Seems to translocate with the RNA polymerase following initiation and acts by binding to the non template strand of the transcription bubble in elongation complexes. The protein is Transcription factor E of Cenarchaeum symbiosum (strain A).